Reading from the N-terminus, the 264-residue chain is Thymidylate synthase (264 aa).

Arginine 21 provides a ligand contact to dUMP. Histidine 51 is a (6R)-5,10-methylene-5,6,7,8-tetrahydrofolate binding site. 126–127 is a binding site for dUMP; the sequence is RR. Cysteine 146 functions as the Nucleophile in the catalytic mechanism. Residues 166–169, asparagine 177, and 207–209 each bind dUMP; these read RSAD and HIY. Position 169 (aspartate 169) interacts with (6R)-5,10-methylene-5,6,7,8-tetrahydrofolate. Position 263 (serine 263) interacts with (6R)-5,10-methylene-5,6,7,8-tetrahydrofolate.

Belongs to the thymidylate synthase family. Bacterial-type ThyA subfamily. Homodimer.

It is found in the cytoplasm. It catalyses the reaction dUMP + (6R)-5,10-methylene-5,6,7,8-tetrahydrofolate = 7,8-dihydrofolate + dTMP. It functions in the pathway pyrimidine metabolism; dTTP biosynthesis. Its function is as follows. Catalyzes the reductive methylation of 2'-deoxyuridine-5'-monophosphate (dUMP) to 2'-deoxythymidine-5'-monophosphate (dTMP) while utilizing 5,10-methylenetetrahydrofolate (mTHF) as the methyl donor and reductant in the reaction, yielding dihydrofolate (DHF) as a by-product. This enzymatic reaction provides an intracellular de novo source of dTMP, an essential precursor for DNA biosynthesis. The chain is Thymidylate synthase from Halalkalibacterium halodurans (strain ATCC BAA-125 / DSM 18197 / FERM 7344 / JCM 9153 / C-125) (Bacillus halodurans).